A 360-amino-acid chain; its full sequence is Actin-like protein MamK (360 aa).

ATP contacts are provided by residues K22, 33 to 34 (TS), and D89. Residue E156 participates in Mg(2+) binding. ATP-binding positions include 177–179 (AGT), 231–235 (KEQFS), and G302.

This sequence belongs to the FtsA/MreB family. MamK subfamily. As to quaternary structure, forms cytoplasmic filaments. Interacts with MamJ. Forms filaments in the absence of other magnetosome proteins and in E.coli. Filament formation in vitro requires ATP, GTP or a non-hydrolyzable ATP analog.

Its subcellular location is the cytoplasm. It localises to the cytoskeleton. The catalysed reaction is ATP + H2O = ADP + phosphate + H(+). Filament dynamics depend partially on MamJ. Its function is as follows. Protein with ATPase activity which forms dynamic cytoplasmic filaments that are involved in sorting, concatenating and/or correctly positioning of magnetosomes in the cell. Not absolutely necessary for assembly of short chains. Filaments grow from the both cell poles towards midcell, and are probably disassembled at the other end of the cell, a process known as treadmilling. Polymerizes in the presence of ATP, GTP or a non-hydrolyzable ATP analog. Required for correct segregation and positioning of magnetosomes following cell division. In Magnetospirillum gryphiswaldense (strain DSM 6361 / JCM 21280 / NBRC 15271 / MSR-1), this protein is Actin-like protein MamK.